The primary structure comprises 1412 residues: DNA-directed RNA polymerase subunit beta' (1412 aa).

C71, C73, C86, and C89 together coordinate Zn(2+). Mg(2+)-binding residues include D461, D463, and D465. Residues C815, C889, C896, and C899 each contribute to the Zn(2+) site.

The protein belongs to the RNA polymerase beta' chain family. As to quaternary structure, the RNAP catalytic core consists of 2 alpha, 1 beta, 1 beta' and 1 omega subunit. When a sigma factor is associated with the core the holoenzyme is formed, which can initiate transcription. Requires Mg(2+) as cofactor. It depends on Zn(2+) as a cofactor.

The enzyme catalyses RNA(n) + a ribonucleoside 5'-triphosphate = RNA(n+1) + diphosphate. DNA-dependent RNA polymerase catalyzes the transcription of DNA into RNA using the four ribonucleoside triphosphates as substrates. This chain is DNA-directed RNA polymerase subunit beta', found in Actinobacillus pleuropneumoniae serotype 5b (strain L20).